We begin with the raw amino-acid sequence, 322 residues long: Phosphoenolpyruvate transferase (322 aa).

Aspartate 58 is a binding site for 7,8-didemethyl-8-hydroxy-5-deazariboflavin.

This sequence belongs to the CofD family. In terms of assembly, homodimer. It depends on Mg(2+) as a cofactor.

It carries out the reaction enolpyruvoyl-2-diphospho-5'-guanosine + 7,8-didemethyl-8-hydroxy-5-deazariboflavin = dehydro coenzyme F420-0 + GMP + H(+). It functions in the pathway cofactor biosynthesis; coenzyme F420 biosynthesis. Catalyzes the transfer of the phosphoenolpyruvate moiety from enoylpyruvoyl-2-diphospho-5'-guanosine (EPPG) to 7,8-didemethyl-8-hydroxy-5-deazariboflavin (FO) with the formation of dehydro coenzyme F420-0 and GMP. This is Phosphoenolpyruvate transferase from Thermobifida fusca (strain YX).